The primary structure comprises 174 residues: Peptide deformylase (174 aa).

Fe cation-binding residues include Cys-91 and His-133. Glu-134 is a catalytic residue. A Fe cation-binding site is contributed by His-137.

It belongs to the polypeptide deformylase family. It depends on Fe(2+) as a cofactor.

The enzyme catalyses N-terminal N-formyl-L-methionyl-[peptide] + H2O = N-terminal L-methionyl-[peptide] + formate. Removes the formyl group from the N-terminal Met of newly synthesized proteins. Requires at least a dipeptide for an efficient rate of reaction. N-terminal L-methionine is a prerequisite for activity but the enzyme has broad specificity at other positions. This chain is Peptide deformylase, found in Fusobacterium nucleatum subsp. nucleatum (strain ATCC 25586 / DSM 15643 / BCRC 10681 / CIP 101130 / JCM 8532 / KCTC 2640 / LMG 13131 / VPI 4355).